The chain runs to 269 residues: Protein TIFY 11B (269 aa).

The Tify domain occupies 100–135; it reads PESGNSQLTIFFGGKVMVFNEFPEDKAKEIMEVAKE. Residues 160 to 181 are disordered; sequence PDLNEPTSSGNNEDQETGQQHQ. A compositionally biased stretch (polar residues) spans 164–181; that stretch reads EPTSSGNNEDQETGQQHQ. Positions 186–210 match the Jas motif; that stretch reads IARRASLHRFFAKRKDRAVARAPYQ. The short motif at 187 to 194 is the Nuclear localization signal element; sequence ARRASLHR. Residues 209–269 are disordered; the sequence is YQVNQHGSHL…QSSKNLELKL (61 aa). Basic and acidic residues predominate over residues 250 to 269; that stretch reads MPMEVDKKEGQSSKNLELKL.

The protein belongs to the TIFY/JAZ family. As to quaternary structure, homo- and heterodimer. Interacts with MYC2, AFPH2/NINJA, TIFY10A/JAZ1, TIFY10B/JAZ2, TIFY11A/JAZ5, TIFY5A/JAZ8, TIFY9/JAZ10 and TIFY3B/JAZ12. (Microbial infection) Interacts with the pathogenic Pseudomonas syringae HopZ1a protein. (Microbial infection) Acetylated by Pseudomonas syringae HopZ1a. In terms of processing, ubiquitinated. Targeted for degradation by the SCF(COI1) E3 ubiquitin ligase-proteasome pathway during jasmonate signaling.

The protein localises to the nucleus. Its subcellular location is the cell membrane. Repressor of jasmonate responses. In Arabidopsis thaliana (Mouse-ear cress), this protein is Protein TIFY 11B.